A 4303-amino-acid chain; its full sequence is Polycystin-1 (4303 aa).

Positions 1–23 (MPPAAPARLALALGLGLWLGALA) are cleaved as a signal peptide. The LRRNT domain occupies 24–67 (GGPGRGCGPCEPPCLCGPAPGAACRVNCSGRGLRTLGPALRIPA). At 24-3074 (GGPGRGCGPC…VFPEPTADVN (3051 aa)) the chain is on the extracellular side. Residues Asn-50 and Asn-89 are each glycosylated (N-linked (GlcNAc...) asparagine). LRR repeat units lie at residues 68 to 91 (DATA…ANLS) and 92 to 113 (ALAE…IFAN). Residues Asn-116 and Asn-121 are each glycosylated (N-linked (GlcNAc...) asparagine). The LRRCT domain maps to 125 to 178 (NPFECDCGLAWLPRWAEEQQVRVVQPEAATCAGPGSLAGQPLLGIPLLDSGCGE). The WSC domain maps to 177 to 271 (GEEYVACLPD…PTLLQHVFPA (95 aa)). An N-linked (GlcNAc...) asparagine glycan is attached at Asn-187. Positions 272–359 (SPGATLVGPH…VQVEAAPAAL (88 aa)) constitute a PKD 1 domain. The 117-residue stretch at 415 to 531 (GNGHCYRLVV…CSAPHSYVCE (117 aa)) folds into the C-type lectin domain. 2 cysteine pairs are disulfide-bonded: Cys-436/Cys-530 and Cys-508/Cys-522. Residues 616–635 (AGTPENGSEPESRSPDNRTQ) are disordered. N-linked (GlcNAc...) asparagine glycosylation is found at Asn-621 and Asn-632. The LDL-receptor class A; atypical domain occupies 638-671 (PACMPGGRWCPGANICLPLDASCHPQACANGCTS). 3 disulfide bridges follow: Cys-640–Cys-653, Cys-647–Cys-665, and Cys-660–Cys-669. One can recognise a PKD 2 domain in the interval 743–817 (LSANASSWLP…RHNLSCSFDV (75 aa)). N-linked (GlcNAc...) asparagine glycosylation is found at Asn-746, Asn-810, Asn-841, Asn-854, Asn-890, Asn-921, Asn-1004, Asn-1010, Asn-1034, Asn-1072, Asn-1113, Asn-1178, Asn-1194, Asn-1240, Asn-1269, Asn-1336, Asn-1348, Asn-1382, Asn-1450, Asn-1455, Asn-1474, Asn-1518, Asn-1541, Asn-1554, Asn-1563, Asn-1647, Asn-1661, Asn-1733, Asn-1791, Asn-1834, Asn-1867, and Asn-1880. PKD domains follow at residues 855–928 (ATAT…RVTA), 935–1020 (LRAT…NRMQ), 1023–1129 (QVST…LPSV), 1127–1215 (PSVA…LRGL), 1213–1298 (RGLS…EVLR), 1294–1383 (LEVL…VGNV), 1382–1469 (NVTL…VLVT), 1468–1551 (VTSI…VRGL), 1550–1635 (GLVV…IEGL), 1634–1721 (GLQV…VGWL), 1719–1805 (GWLM…VSGL), 1807–1890 (IRAS…IVGL), 1889–1974 (GLVL…VSGL), 1977–2057 (PNCC…VLEV), and 2060–2148 (AVQY…ACRE). Asn-1991, Asn-2050, Asn-2074, Asn-2125, Asn-2248, Asn-2353, Asn-2395, Asn-2412, Asn-2567, Asn-2578, Asn-2645, Asn-2718, Asn-2754, Asn-2841, Asn-2878, Asn-2925, Asn-2956, and Asn-2994 each carry an N-linked (GlcNAc...) asparagine glycan. Positions 2146 to 2833 (CREPEVDVVL…QLIFLVDSNP (688 aa)) constitute an REJ domain. Residues 2862–3063 (PIERLASERA…SLFVPPSHVR (202 aa)) enclose the GAIN-B domain. A disulfide bridge connects residues Cys-3015 and Cys-3043. Residues 3015–3063 (CQYFSEEDMVWRTEGLLPLEETSPRQAVCLTRHLTAFGASLFVPPSHVR) form a GPS region. A helical transmembrane segment spans residues 3075 to 3095 (YIVMLTCAVCLVTYMVMAAIL). Residues 3096–3277 (HKLDQLDASR…DRPPRSRFTR (182 aa)) are Cytoplasmic-facing. Residues 3118-3233 (FKYEILVKTG…EANGGLVEKE (116 aa)) enclose the PLAT domain. Residues 3278 to 3298 (IQRATCCVLLICLFLGANAVW) traverse the membrane as a helical segment. The Extracellular segment spans residues 3299–3323 (YGAVGDSAYSTGHVSRLSPLSVDTV). The chain crosses the membrane as a helical span at residues 3324-3344 (AVGLVSSVVVYPVYLAILFLF). Topologically, residues 3345–3559 (RMSRSKVAGS…LPAWCASLAH (215 aa)) are cytoplasmic. Residues 3560 to 3580 (GLSLLLVAVAVAVSGWVGASF) form a helical membrane-spanning segment. The Extracellular portion of the chain corresponds to 3581 to 3582 (PP). A helical membrane pass occupies residues 3583–3603 (GVSVAWLLSSSASFLASFLGW). Residues 3604–3665 (EPLKVLLEAL…LAKEEARKVK (62 aa)) are Cytoplasmic-facing. Residues 3666 to 3686 (RLHGMLRSLLVYMLFLLVTLL) traverse the membrane as a helical segment. Over 3687–3901 (ASYGDASCHG…RLSAGLSLPL (215 aa)) the chain is Extracellular. Asn-3738, Asn-3790, and Asn-3845 each carry an N-linked (GlcNAc...) asparagine glycan. A helical membrane pass occupies residues 3902–3922 (LTSVCLLLFAVHFAVAEARTW). Topologically, residues 3923–3935 (HREGRWRVLRLGA) are cytoplasmic. Residues 3936–3956 (WARWLLVALTAATALVRLAQL) traverse the membrane as a helical segment. The Extracellular portion of the chain corresponds to 3957-3984 (GAADRQWTRFVRGRPRRFTSFDQVAQLS). The chain crosses the membrane as a helical span at residues 3985-4005 (SAARGLAASLLFLLLVKAAQQ). At 4006–4027 (LRFVRQWSVFGKTLCRALPELL) the chain is on the cytoplasmic side. The chain crosses the membrane as a helical span at residues 4028–4048 (GVTLGLVVLGVAYAQLAILLV). Over 4049-4090 (SSCVDSLWSVAQALLVLCPGTGLSTLCPAESWHLSPLLCVGL) the chain is Extracellular. The helical transmembrane segment at 4091–4110 (WALRLWGALRLGAVILRWRY) threads the bilayer. Topologically, residues 4111-4303 (HALRGELYRP…AKNKVHPSST (193 aa)) are cytoplasmic. Disordered stretches follow at residues 4160-4196 (PLPS…QLDG) and 4243-4303 (LHSL…PSST). Ser-4166 is subject to Phosphoserine; by PRKX; in vitro. The span at 4185–4195 (SHPSTSSSQLD) shows a compositional bias: polar residues. Residues 4220 to 4251 (EALLTQFDRLNQATEDVYQLEQQLHSLQGRRS) are a coiled coil. The span at 4253 to 4269 (RAPAGSSRGPSPGLRPA) shows a compositional bias: low complexity. A compositionally biased stretch (basic residues) spans 4292–4303 (LRAKNKVHPSST).

This sequence belongs to the polycystin family. In terms of assembly, component of the heterotetrameric polycystin channel complex with PKD2; the tetramer contains one PKD1 chain and three PKD2 chains. Interacts with PKD2; the interaction is required for ciliary localization. Interacts with PKD2L1. Interacts with PRKX; involved in differentiation and controlled morphogenesis of the kidney. Interacts (via extracellular domain) with WNT3A, WNT4, WNT5A and WNT9B. Interacts with DVL1 and DVL2. Interacts with NPHP1 (via SH3 domain). Interacts with BBS1, BBS4, BBS5 and TTC8. Interacts with RGS7. Interacts (via the PKD repeats in the N-terminal extracellular region) with EPCIP; the interaction is not dependent on N-glycosylation of either protein. Post-translationally, N-glycosylated. After synthesis, undergoes cleavage between Leu-3048 and Thr-3049 in the GPS region of the GAIN-B domain. Cleavage at the GPS region occurs through a cis-autoproteolytic mechanism involving an ester-intermediate via N-O acyl rearrangement. This process takes place in the early secretory pathway, depends on initial N-glycosylation, and requires the REJ domain. There is evidence that cleavage at GPS region is incomplete. Uncleaved and cleaved products may have different functions in vivo.

The protein localises to the cell membrane. Its subcellular location is the cell projection. The protein resides in the cilium. It localises to the endoplasmic reticulum. It is found in the golgi apparatus. The protein localises to the vesicle. Its subcellular location is the secreted. The protein resides in the extracellular exosome. Functionally, component of a heteromeric calcium-permeable ion channel formed by PKD1 and PKD2 that is activated by interaction between PKD1 and a Wnt family member, such as WNT3A and WNT9B. Both PKD1 and PKD2 are required for channel activity. Involved in renal tubulogenesis. Involved in fluid-flow mechanosensation by the primary cilium in renal epithelium. Acts as a regulator of cilium length, together with PKD2. The dynamic control of cilium length is essential in the regulation of mechanotransductive signaling. The cilium length response creates a negative feedback loop whereby fluid shear-mediated deflection of the primary cilium, which decreases intracellular cAMP, leads to cilium shortening and thus decreases flow-induced signaling. May be an ion-channel regulator. Involved in adhesive protein-protein and protein-carbohydrate interactions. Likely to be involved with polycystin-1-interacting protein 1 in the detection, sequestration and exocytosis of senescent mitochondria. The chain is Polycystin-1 from Homo sapiens (Human).